A 388-amino-acid polypeptide reads, in one-letter code: Outer membrane protein assembly factor BamB (388 aa).

Positions 1–21 (MILGWTQRIFTLLVVVTLLAA) are cleaved as a signal peptide. Cys22 carries N-palmitoyl cysteine lipidation. The S-diacylglycerol cysteine moiety is linked to residue Cys22.

It belongs to the BamB family. In terms of assembly, part of the Bam complex.

The protein localises to the cell outer membrane. Functionally, part of the outer membrane protein assembly complex, which is involved in assembly and insertion of beta-barrel proteins into the outer membrane. The polypeptide is Outer membrane protein assembly factor BamB (Kangiella koreensis (strain DSM 16069 / JCM 12317 / KCTC 12182 / SW-125)).